The primary structure comprises 345 residues: MSKRGTRTPGYWYDNTPIPLPARILAPVYGAAIALRRALYRRGWRRRHRVPVPVIVVGNVTAGGTGKTPLTIALVVKLQEAGWTPGVASRGYGRDDAGTARWVEADTPVALGGDEPVLIAWKTGARVRVDSDRLAAARALVEAGCDIVICDDGLQHYRLARDVEIEVVDGQRRYGNGRLLPAGPLREPAARARDCDFRVVNLGQASATAAPQVPDDAGFGEWQMRLSIDSVQPMDGKRAQPLSMLAGQRVHAVAGIAHPERFFAMLRARGIGVVPHAFPDHHVYRAADFSFGSRLPVLMTEKDAVKCRPFADEWLYSVPLKAELPAAFWVSLLDRLNKLASRQGV.

ATP is bound at residue 61 to 68 (TAGGTGKT).

This sequence belongs to the LpxK family.

The enzyme catalyses a lipid A disaccharide + ATP = a lipid IVA + ADP + H(+). The protein operates within glycolipid biosynthesis; lipid IV(A) biosynthesis; lipid IV(A) from (3R)-3-hydroxytetradecanoyl-[acyl-carrier-protein] and UDP-N-acetyl-alpha-D-glucosamine: step 6/6. In terms of biological role, transfers the gamma-phosphate of ATP to the 4'-position of a tetraacyldisaccharide 1-phosphate intermediate (termed DS-1-P) to form tetraacyldisaccharide 1,4'-bis-phosphate (lipid IVA). In Xanthomonas euvesicatoria pv. vesicatoria (strain 85-10) (Xanthomonas campestris pv. vesicatoria), this protein is Tetraacyldisaccharide 4'-kinase.